The primary structure comprises 48 residues: Large ribosomal subunit protein bL34 (48 aa).

The protein belongs to the bacterial ribosomal protein bL34 family.

This chain is Large ribosomal subunit protein bL34, found in Gloeothece citriformis (strain PCC 7424) (Cyanothece sp. (strain PCC 7424)).